A 520-amino-acid polypeptide reads, in one-letter code: Keratin, type II cytoskeletal 4 (520 aa).

The interval 1-136 (MIARQQCVRG…DPEIQKVRTE (136 aa)) is head. Omega-N-methylarginine is present on arginine 13. Residues 137 to 172 (EREQIKLLNNKFASFIDKVQFLEQQNKVLETKWNLL) are coil 1A. In terms of domain architecture, IF rod spans 137–450 (EREQIKLLNN…KLLEGEEYRM (314 aa)). Positions 173 to 191 (QQQTTTTSSKNLEPLFETY) are linker 1. The coil 1B stretch occupies residues 192 to 284 (LSVLRKQLDT…LYDAELSQMQ (93 aa)). The linker 12 stretch occupies residues 285-307 (THVSDTSVVLSMDNNRNLDLDSI). The interval 308–447 (IAEVRAQYEE…TYRKLLEGEE (140 aa)) is coil 2. The tail stretch occupies residues 448–520 (YRMSGECQSA…ISTTTLNKRR (73 aa)). Residues 500 to 520 (GSVSGSSSSKIISTTTLNKRR) are disordered. Residues 503-514 (SGSSSSKIISTT) are compositionally biased toward low complexity.

This sequence belongs to the intermediate filament family. As to quaternary structure, heterotetramer of two type I and two type II keratins. Keratin-4 is generally associated with keratin-13. Detected in the suprabasal layer of the stratified epithelium of the esophagus, exocervix, vagina, mouth and lingual mucosa, and in cells and cell clusters in the mucosa and serous gland ducts of the esophageal submucosa (at protein level). Expressed widely in the exocervix and esophageal epithelium, with lowest levels detected in the basal cell layer.

This chain is Keratin, type II cytoskeletal 4 (KRT4), found in Homo sapiens (Human).